Reading from the N-terminus, the 358-residue chain is Molybdenum import ATP-binding protein ModC (358 aa).

The ABC transporter domain maps to 2-234 (NDDISASFFS…PDLPLAHLEE (233 aa)). An ATP-binding site is contributed by 34 to 41 (GRSGSGKT). The region spanning 293–358 (LSSISNCIPV…AQVKSVALID (66 aa)) is the Mop domain.

Belongs to the ABC transporter superfamily. Molybdate importer (TC 3.A.1.8) family. As to quaternary structure, the complex is composed of two ATP-binding proteins (ModC), two transmembrane proteins (ModB) and a solute-binding protein (ModA).

The protein resides in the cell inner membrane. The enzyme catalyses molybdate(out) + ATP + H2O = molybdate(in) + ADP + phosphate + H(+). In terms of biological role, part of the ABC transporter complex ModABC involved in molybdenum import. Responsible for energy coupling to the transport system. This Hahella chejuensis (strain KCTC 2396) protein is Molybdenum import ATP-binding protein ModC.